The primary structure comprises 404 residues: tRNA/tmRNA (uracil-C(5))-methyltransferase (404 aa).

S-adenosyl-L-methionine is bound by residues Gln218, Tyr251, Asn256, Glu272, and Asp332. Catalysis depends on Cys358, which acts as the Nucleophile. Glu392 acts as the Proton acceptor in catalysis.

This sequence belongs to the class I-like SAM-binding methyltransferase superfamily. RNA M5U methyltransferase family. TrmA subfamily.

It carries out the reaction uridine(54) in tRNA + S-adenosyl-L-methionine = 5-methyluridine(54) in tRNA + S-adenosyl-L-homocysteine + H(+). The catalysed reaction is uridine(341) in tmRNA + S-adenosyl-L-methionine = 5-methyluridine(341) in tmRNA + S-adenosyl-L-homocysteine + H(+). Functionally, dual-specificity methyltransferase that catalyzes the formation of 5-methyluridine at position 54 (m5U54) in all tRNAs, and that of position 341 (m5U341) in tmRNA (transfer-mRNA). This chain is tRNA/tmRNA (uracil-C(5))-methyltransferase, found in Helicobacter hepaticus (strain ATCC 51449 / 3B1).